Reading from the N-terminus, the 312-residue chain is Methionyl-tRNA formyltransferase (312 aa).

Residue 111-114 (SLLP) participates in (6S)-5,6,7,8-tetrahydrofolate binding.

Belongs to the Fmt family.

It catalyses the reaction L-methionyl-tRNA(fMet) + (6R)-10-formyltetrahydrofolate = N-formyl-L-methionyl-tRNA(fMet) + (6S)-5,6,7,8-tetrahydrofolate + H(+). Functionally, attaches a formyl group to the free amino group of methionyl-tRNA(fMet). The formyl group appears to play a dual role in the initiator identity of N-formylmethionyl-tRNA by promoting its recognition by IF2 and preventing the misappropriation of this tRNA by the elongation apparatus. In Rhodopseudomonas palustris (strain HaA2), this protein is Methionyl-tRNA formyltransferase.